Reading from the N-terminus, the 298-residue chain is MSLKLDGKKLSLEIEERLNDYIFINKKIAKRAPGLAVIRIGEDPASGVYVNNKEKACSRVGIKSFIFHLKDNVEQKEVEQLINKLNFDKNIDGMLLQLPIPKKFDEQRLISYINPSKDVDGLNEINIGKLVKNEPAMRSCTPAGIINLLRSQNITIEGKKIVVIGRSLLVGKPLSLMLLNLNGTVTMTHSKTLDLNKVCKEADILIAAAGKPNLIDSSFVKEGAVIIDVGIHRLKSSDKNKTRLCGDVLLEDVIPKVLAYTPVPGGVGPMTVTMLLVNTIFSWQKQFGLSSTLNDLLP.

Residues 165-167 (GRS), Ser190, and Ile231 contribute to the NADP(+) site.

This sequence belongs to the tetrahydrofolate dehydrogenase/cyclohydrolase family. Homodimer.

It catalyses the reaction (6R)-5,10-methylene-5,6,7,8-tetrahydrofolate + NADP(+) = (6R)-5,10-methenyltetrahydrofolate + NADPH. The catalysed reaction is (6R)-5,10-methenyltetrahydrofolate + H2O = (6R)-10-formyltetrahydrofolate + H(+). It functions in the pathway one-carbon metabolism; tetrahydrofolate interconversion. In terms of biological role, catalyzes the oxidation of 5,10-methylenetetrahydrofolate to 5,10-methenyltetrahydrofolate and then the hydrolysis of 5,10-methenyltetrahydrofolate to 10-formyltetrahydrofolate. In Prochlorococcus marinus (strain MIT 9312), this protein is Bifunctional protein FolD.